Here is a 483-residue protein sequence, read N- to C-terminus: Nucleolar protein 4 (483 aa).

Disordered stretches follow at residues 210–418 and 435–483; these read QQDE…PIPS and SESR…DPQI. A compositionally biased stretch (acidic residues) spans 211–225; it reads QDEDESSIESDEFDM. 3 stretches are compositionally biased toward polar residues: residues 229-254, 262-271, and 302-317; these read TRMS…TVHG, AESSNGNETL, and QPLN…QLTS. Composition is skewed to basic and acidic residues over residues 319–330 and 340–350; these read FRIDDQGSDGKN and LKMEREARENG. A compositionally biased stretch (polar residues) spans 351 to 363; that stretch reads SKSPAHSYSSYDS. 3 stretches are compositionally biased toward basic and acidic residues: residues 364–374, 391–409, and 435–451; these read GKNESVDRGAE, HEDS…ERLK, and SESR…KAQD. Over residues 467–483 the composition is skewed to polar residues; that stretch reads ATYSTATVPGSQEDPQI.

The protein localises to the nucleus. It localises to the nucleolus. The sequence is that of Nucleolar protein 4 (Nol4) from Mus musculus (Mouse).